Consider the following 427-residue polypeptide: Tol-Pal system protein TolB (427 aa).

A signal peptide spans 1–25 (MKTFAQLRLLLAAAALALLSFSAQA).

This sequence belongs to the TolB family. As to quaternary structure, the Tol-Pal system is composed of five core proteins: the inner membrane proteins TolA, TolQ and TolR, the periplasmic protein TolB and the outer membrane protein Pal. They form a network linking the inner and outer membranes and the peptidoglycan layer.

The protein resides in the periplasm. In terms of biological role, part of the Tol-Pal system, which plays a role in outer membrane invagination during cell division and is important for maintaining outer membrane integrity. This Azoarcus sp. (strain BH72) protein is Tol-Pal system protein TolB.